Here is a 157-residue protein sequence, read N- to C-terminus: SsrA-binding protein (157 aa).

The protein belongs to the SmpB family.

It is found in the cytoplasm. Its function is as follows. Required for rescue of stalled ribosomes mediated by trans-translation. Binds to transfer-messenger RNA (tmRNA), required for stable association of tmRNA with ribosomes. tmRNA and SmpB together mimic tRNA shape, replacing the anticodon stem-loop with SmpB. tmRNA is encoded by the ssrA gene; the 2 termini fold to resemble tRNA(Ala) and it encodes a 'tag peptide', a short internal open reading frame. During trans-translation Ala-aminoacylated tmRNA acts like a tRNA, entering the A-site of stalled ribosomes, displacing the stalled mRNA. The ribosome then switches to translate the ORF on the tmRNA; the nascent peptide is terminated with the 'tag peptide' encoded by the tmRNA and targeted for degradation. The ribosome is freed to recommence translation, which seems to be the essential function of trans-translation. This chain is SsrA-binding protein, found in Lacticaseibacillus paracasei (strain ATCC 334 / BCRC 17002 / CCUG 31169 / CIP 107868 / KCTC 3260 / NRRL B-441) (Lactobacillus paracasei).